A 608-amino-acid chain; its full sequence is UvrABC system protein C (608 aa).

Residues 13–91 enclose the GIY-YIG domain; it reads HDPGVYRMFD…IKTFQPRYNV (79 aa). Positions 201–236 constitute a UVR domain; sequence QQVLDHLIGKMERASRALNFEEAARYRDQIQAVRSV.

This sequence belongs to the UvrC family. In terms of assembly, interacts with UvrB in an incision complex.

The protein localises to the cytoplasm. The UvrABC repair system catalyzes the recognition and processing of DNA lesions. UvrC both incises the 5' and 3' sides of the lesion. The N-terminal half is responsible for the 3' incision and the C-terminal half is responsible for the 5' incision. This chain is UvrABC system protein C, found in Mannheimia succiniciproducens (strain KCTC 0769BP / MBEL55E).